The following is a 305-amino-acid chain: Lysosomal thioesterase PPT2 (305 aa).

A signal peptide spans Met-1–Pro-32. Intrachain disulfides connect Cys-112–Cys-120 and Cys-168–Cys-179. Ser-114 serves as the catalytic Nucleophile. Asn-193 carries N-linked (GlcNAc...) asparagine glycosylation. Active-site residues include Asp-231 and His-286. A disulfide bridge connects residues Cys-279 and Cys-299.

Belongs to the palmitoyl-protein thioesterase family.

The protein localises to the lysosome. It catalyses the reaction hexadecanoyl-CoA + H2O = hexadecanoate + CoA + H(+). The catalysed reaction is S-hexadecanoyl-N-acetylcysteamine + H2O = N-acetylcysteamine + hexadecanoate + H(+). Functionally, catalyzes the cleavage of thioester bonds from S-palmitoyl-CoA or S-palmitoyl-N-acetylcysteamine (unbranched structures) but does not have activity against palmitoylcysteine or palmitoylated proteins, branched structures or bulky head groups. Conversely, hydrolyzes both long and short chain fatty acyl-CoA substrate. This Bos taurus (Bovine) protein is Lysosomal thioesterase PPT2 (PPT2).